The chain runs to 214 residues: UPF0725 protein At1g19565 (214 aa).

The segment at 56 to 92 (EEEYEPSLPSSESPTDSCHADHESPDSPKYQQPAPGE) is disordered.

The protein belongs to the UPF0725 (EMB2204) family.

The protein is UPF0725 protein At1g19565 of Arabidopsis thaliana (Mouse-ear cress).